Reading from the N-terminus, the 109-residue chain is MAPKKSKSDAQSIGAKLALVIKSGKVVLGYRSTLKALRSGKAKLILISANTPPLRKSELEYYSMMSKTAVHHYTGTNIELGTACGKLFRCSTMAILDAGDSDILADQQQ.

This sequence belongs to the eukaryotic ribosomal protein eL30 family. Component of the large ribosomal subunit (LSU). Mature N.crassa ribosomes consist of a small (40S) and a large (60S) subunit. The 40S small subunit contains 1 molecule of ribosomal RNA (18S rRNA) and at least 32 different proteins. The large 60S subunit contains 3 rRNA molecules (26S, 5.8S and 5S rRNA) and at least 42 different proteins.

It localises to the cytoplasm. Functionally, component of the ribosome, a large ribonucleoprotein complex responsible for the synthesis of proteins in the cell. The small ribosomal subunit (SSU) binds messenger RNAs (mRNAs) and translates the encoded message by selecting cognate aminoacyl-transfer RNA (tRNA) molecules. The large subunit (LSU) contains the ribosomal catalytic site termed the peptidyl transferase center (PTC), which catalyzes the formation of peptide bonds, thereby polymerizing the amino acids delivered by tRNAs into a polypeptide chain. The nascent polypeptides leave the ribosome through a tunnel in the LSU and interact with protein factors that function in enzymatic processing, targeting, and the membrane insertion of nascent chains at the exit of the ribosomal tunnel. The chain is Large ribosomal subunit protein eL30 (rpl-30) from Neurospora crassa (strain ATCC 24698 / 74-OR23-1A / CBS 708.71 / DSM 1257 / FGSC 987).